The chain runs to 180 residues: WPP domain-containing protein 2 (180 aa).

Low complexity predominate over residues Met-1 to Ser-26. Disordered regions lie at residues Met-1–Trp-61 and Ser-140–Ala-180. Over residues Ala-27 to Ala-36 the composition is skewed to polar residues. Basic and acidic residues predominate over residues Ala-37 to Pro-53. The tract at residues Thr-44–Ala-147 is WPP. Phosphoserine is present on Ser-173.

As to quaternary structure, binds to FPP proteins. Interacts with WAP, WIP1, WIP2 and WIP3 through its WPP domain. Interacts with WIT1 and HSP70-1. In terms of tissue distribution, expressed in roots, stems, leaves and flowers.

It localises to the nucleus envelope. It is found in the cytoplasm. The protein resides in the nucleus. Its subcellular location is the golgi apparatus. Functionally, regulates the mitotic activity in roots. Plays a role with HSP70-1 in facilitating WIT1 nuclear envelope targeting. This chain is WPP domain-containing protein 2 (WPP2), found in Arabidopsis thaliana (Mouse-ear cress).